A 98-amino-acid polypeptide reads, in one-letter code: Class II hydrophobin 3 (98 aa).

Positions 1 to 18 (MQFTTTTLIAILSALAVA) are cleaved as a signal peptide. Residues Asn26 and Asn54 are each glycosylated (N-linked (GlcNAc...) asparagine). Disulfide bonds link Cys35/Cys83, Cys44/Cys74, Cys45/Cys57, and Cys84/Cys95.

Belongs to the cerato-ulmin hydrophobin family.

The protein resides in the secreted. Its subcellular location is the cell wall. In terms of biological role, aerial growth, conidiation, and dispersal of filamentous fungi in the environment rely upon a capability of their secreting small amphipathic proteins called hydrophobins (HPBs) with low sequence identity. Class I can self-assemble into an outermost layer of rodlet bundles on aerial cell surfaces, conferring cellular hydrophobicity that supports fungal growth, development and dispersal; whereas Class II form highly ordered films at water-air interfaces through intermolecular interactions but contribute nothing to the rodlet structure. In Botryotinia fuckeliana, hydrophobins are not involved in conferring surface hydrophobicity to conidia and aerial hyphae and their function in sclerotia and fruiting bodies remains to be investigated. The sequence is that of Class II hydrophobin 3 from Botryotinia fuckeliana (strain B05.10) (Noble rot fungus).